We begin with the raw amino-acid sequence, 532 residues long: Deoxyribodipyrimidine photo-lyase (532 aa).

The segment at 1–57 (MDSKKRSHSTGGEAENMESQESKAKRKPLQKHQFSKSNVVQKEEKDKTEGEEKGAEG) is disordered. Positions 24-34 (AKRKPLQKHQF) are enriched in basic residues. The segment covering 41–55 (QKEEKDKTEGEEKGA) has biased composition (basic and acidic residues). One can recognise a Photolyase/cryptochrome alpha/beta domain in the interval 97 to 229 (QAFVYWMSRD…QVDAHNIVPC (133 aa)). DNA is bound at residue arginine 322. 2 interaction with DNA regions span residues 368–376 (EAVVRRELA) and 442–443 (GF). Position 468–470 (468–470 (YLN)) interacts with FAD.

The protein belongs to the DNA photolyase class-2 family. The cofactor is FAD.

It carries out the reaction cyclobutadipyrimidine (in DNA) = 2 pyrimidine residues (in DNA).. Involved in repair of UV radiation-induced DNA damage. Catalyzes the light-dependent monomerization (300-600 nm) of cyclobutyl pyrimidine dimers (in cis-syn configuration), which are formed between adjacent bases on the same DNA strand upon exposure to ultraviolet radiation. The chain is Deoxyribodipyrimidine photo-lyase (PHR) from Potorous tridactylus (Potoroo).